We begin with the raw amino-acid sequence, 214 residues long: Orotate phosphoribosyltransferase (214 aa).

5-phospho-alpha-D-ribose 1-diphosphate is bound by residues Arg125, Lys126, Lys129, His131, and 151–159 (EDTSTTGNS). Thr155 and Arg183 together coordinate orotate.

The protein belongs to the purine/pyrimidine phosphoribosyltransferase family. PyrE subfamily. As to quaternary structure, homodimer. It depends on Mg(2+) as a cofactor.

It catalyses the reaction orotidine 5'-phosphate + diphosphate = orotate + 5-phospho-alpha-D-ribose 1-diphosphate. It functions in the pathway pyrimidine metabolism; UMP biosynthesis via de novo pathway; UMP from orotate: step 1/2. In terms of biological role, catalyzes the transfer of a ribosyl phosphate group from 5-phosphoribose 1-diphosphate to orotate, leading to the formation of orotidine monophosphate (OMP). This chain is Orotate phosphoribosyltransferase, found in Tropheryma whipplei (strain Twist) (Whipple's bacillus).